The primary structure comprises 66 residues: Ocellatin-PT4 (66 aa).

Positions 1–22 (MAFLKKSLFLVLFLGLVSLSIC) are cleaved as a signal peptide. A propeptide spanning residues 23 to 39 (DEEKRQDEDDDDDDDEE) is cleaved from the precursor. Val-66 carries the post-translational modification Valine amide.

In terms of tissue distribution, expressed by the skin glands.

It is found in the secreted. Has antibacterial activity against Gram-negative bacteria E.coli ATCC 25922 (MIC=80 uM), K.pneumoniae ATCC 700603 (MIC=310 uM) and S.choleraesuis ATCC 14028 (MIC=310 uM). Shows no hemolytic activity and no cytotoxicity. This is Ocellatin-PT4 from Leptodactylus pustulatus (Ceara white-lipped frog).